The primary structure comprises 261 residues: MRTGVIAKKLGMARFFDEAGVHVPVTVLSLEGCQVVAHRTKDKDGYVALQLGAGSKKPKNTSKGLRGHFAKGQVEPKAKLVEFKVSEDNLIDVGAELTADHFVPGQKVDITGTTVGKGFAGAMKRWNFGGLRATHGVSVSHRSHGSTGQRQDPGRTFPGKKMAGHYGQETVTTLNLTVWRVDAERGLILVKGAVPGTEGTFVKIRDAVKAALPADAPKPGAFRGAGAPTPVEAAADEAAPAEEPAVTEAPAAEATEAGDQA.

Positions 138–148 are enriched in low complexity; that stretch reads SVSHRSHGSTG. Disordered regions lie at residues 138–163 and 214–261; these read SVSHRSHGSTGQRQDPGRTFPGKKMA and ADAP…GDQA. An N5-methylglutamine modification is found at glutamine 151. A compositionally biased stretch (low complexity) spans 227 to 261; the sequence is APTPVEAAADEAAPAEEPAVTEAPAAEATEAGDQA.

Belongs to the universal ribosomal protein uL3 family. Part of the 50S ribosomal subunit. Forms a cluster with proteins L14 and L19. Post-translationally, methylated by PrmB.

In terms of biological role, one of the primary rRNA binding proteins, it binds directly near the 3'-end of the 23S rRNA, where it nucleates assembly of the 50S subunit. This Phenylobacterium zucineum (strain HLK1) protein is Large ribosomal subunit protein uL3.